We begin with the raw amino-acid sequence, 101 residues long: Small ribosomal subunit protein uS14 (101 aa).

The tract at residues 36-61 (ASAEDRRAARQKLQSLPRNSSPVRQR) is disordered. The segment covering 47-59 (KLQSLPRNSSPVR) has biased composition (polar residues).

It belongs to the universal ribosomal protein uS14 family. As to quaternary structure, part of the 30S ribosomal subunit. Contacts proteins S3 and S10.

In terms of biological role, binds 16S rRNA, required for the assembly of 30S particles and may also be responsible for determining the conformation of the 16S rRNA at the A site. The sequence is that of Small ribosomal subunit protein uS14 from Methylobacillus flagellatus (strain ATCC 51484 / DSM 6875 / VKM B-1610 / KT).